The chain runs to 284 residues: Bifunctional protein FolD (284 aa).

NADP(+) contacts are provided by residues 166–168 (GAS) and Ile232.

Belongs to the tetrahydrofolate dehydrogenase/cyclohydrolase family. In terms of assembly, homodimer.

The catalysed reaction is (6R)-5,10-methylene-5,6,7,8-tetrahydrofolate + NADP(+) = (6R)-5,10-methenyltetrahydrofolate + NADPH. It carries out the reaction (6R)-5,10-methenyltetrahydrofolate + H2O = (6R)-10-formyltetrahydrofolate + H(+). Its pathway is one-carbon metabolism; tetrahydrofolate interconversion. Catalyzes the oxidation of 5,10-methylenetetrahydrofolate to 5,10-methenyltetrahydrofolate and then the hydrolysis of 5,10-methenyltetrahydrofolate to 10-formyltetrahydrofolate. The sequence is that of Bifunctional protein FolD from Pseudomonas fluorescens (strain Pf0-1).